The following is a 420-amino-acid chain: 3-phosphoshikimate 1-carboxyvinyltransferase (420 aa).

Residues K26, S27, and R31 each contribute to the 3-phosphoshikimate site. Position 26 (K26) interacts with phosphoenolpyruvate. G97 and R125 together coordinate phosphoenolpyruvate. Residues S170, S171, Q172, D297, N320, and K324 each contribute to the 3-phosphoshikimate site. Q172 contacts phosphoenolpyruvate. D297 serves as the catalytic Proton acceptor. Positions 328, 375, and 400 each coordinate phosphoenolpyruvate.

Belongs to the EPSP synthase family. Monomer.

It localises to the cytoplasm. It carries out the reaction 3-phosphoshikimate + phosphoenolpyruvate = 5-O-(1-carboxyvinyl)-3-phosphoshikimate + phosphate. It functions in the pathway metabolic intermediate biosynthesis; chorismate biosynthesis; chorismate from D-erythrose 4-phosphate and phosphoenolpyruvate: step 6/7. Catalyzes the transfer of the enolpyruvyl moiety of phosphoenolpyruvate (PEP) to the 5-hydroxyl of shikimate-3-phosphate (S3P) to produce enolpyruvyl shikimate-3-phosphate and inorganic phosphate. In Rhizobium etli (strain ATCC 51251 / DSM 11541 / JCM 21823 / NBRC 15573 / CFN 42), this protein is 3-phosphoshikimate 1-carboxyvinyltransferase.